The primary structure comprises 236 residues: MYNRVVLKLSGEALAGEQGYGIDPTVIQSIAKQIKEITELNIEVAVVVGAGNIWRGMAGSAQGMDRATADYMGMLATVMNSLALQDSLEAIGVESRVQTSIEMRQVAEPYIRRKAIRHLQKKRVVIFAAGTGNPYFSTDTTAALRAAEIEAEVILMAKNNVDGVYNADPRVDDKAQKFDTITYMDVLKDGLQVMDSTASSLCMDNDIPLIVFSIMEEGNIKRAVLGEKIGTTVRGK.

An ATP-binding site is contributed by 8–11; that stretch reads KLSG. The tract at residues 16–21 is involved in allosteric activation by GTP; that stretch reads GEQGYG. ATP-binding residues include G51 and R55. UMP-binding positions include D70 and 131–138; that span reads TGNPYFST. 3 residues coordinate ATP: N159, Y165, and D168.

This sequence belongs to the UMP kinase family. In terms of assembly, homohexamer.

The protein resides in the cytoplasm. The enzyme catalyses UMP + ATP = UDP + ADP. It functions in the pathway pyrimidine metabolism; CTP biosynthesis via de novo pathway; UDP from UMP (UMPK route): step 1/1. With respect to regulation, allosterically activated by GTP. Inhibited by UTP. Functionally, catalyzes the reversible phosphorylation of UMP to UDP. This chain is Uridylate kinase, found in Shouchella clausii (strain KSM-K16) (Alkalihalobacillus clausii).